A 37-amino-acid chain; its full sequence is Mu-agatoxin-Aa1b (37 aa).

Cystine bridges form between cysteine 2-cysteine 18, cysteine 9-cysteine 23, cysteine 17-cysteine 33, and cysteine 25-cysteine 31. Serine 37 is subject to Serine amide.

This sequence belongs to the neurotoxin 07 (Beta/delta-agtx) family. 01 (aga-2) subfamily. In terms of tissue distribution, expressed by the venom gland.

The protein localises to the secreted. Functionally, insecticidal neurotoxin that induces an irreversible spastic paralysis when injected into insects. Modifies presynaptic voltage-gated sodium channels (Nav), causing them to open at the normal resting potential of the nerve. This leads to spontaneous release of neurotransmitter and repetitive action potentials in motor neurons. This Agelenopsis aperta (North American funnel-web spider) protein is Mu-agatoxin-Aa1b.